The chain runs to 228 residues: Chaperone protein FanE (228 aa).

The first 19 residues, 1–19 (MNKFISIIALCVFSSYANA), serve as a signal peptide directing secretion. Cys157 and Cys198 are joined by a disulfide.

This sequence belongs to the periplasmic pilus chaperone family.

The protein localises to the periplasm. Mediates assembly of pili by forming soluble multimeric complexes with pili subunits as an intermediate step in the assembly process. This protein is involved in K99 pili assembly. This chain is Chaperone protein FanE (fanE), found in Escherichia coli.